The chain runs to 478 residues: MTVPGHRTDLPAELQRVHMVGIGGAGMSGIARILLDRGGLVSGSDAKESRGVIALRARGAEIRIGHDPSALDMLAGGPTAVVTTHAAIPKTNPELVEARRRGIPVLLRPAVLARLMAGHTTLMVTGTHGKTTTTSMLIVALQHSGFDPSFAVGGDLGEAGTNAHHGSGSSFVAEADESDGSLLEYRPDIVVVTNIEADHLDFFGSVEAYTEVFDRFAGRIDPGGALVVCVDDPGARALAERLSGSGLRVLRYGSTGTGALDATLLEWTQQGTGAVASIALRTEARPLTMRLSVPGRHMALNALGALLAAREAGADLESVLDGLAGFEGVRRRFELVGSANGVRVFDDYAHHPTEVRATLTALRAVVDQAGSGRAIVVFQPHLYSRTVTFASEFGAALSAADEVFVLDVYAAREQPLAGVSGATVADAVSAPVTYLPDFSAVAARVAASVAPGDVVVTMGAGDVTLLGREILAEVEARA.

Residue 126–132 participates in ATP binding; sequence GTHGKTT.

The protein belongs to the MurCDEF family.

It is found in the cytoplasm. It carries out the reaction UDP-N-acetyl-alpha-D-muramate + L-alanine + ATP = UDP-N-acetyl-alpha-D-muramoyl-L-alanine + ADP + phosphate + H(+). The protein operates within cell wall biogenesis; peptidoglycan biosynthesis. Cell wall formation. The sequence is that of UDP-N-acetylmuramate--L-alanine ligase from Mycolicibacterium vanbaalenii (strain DSM 7251 / JCM 13017 / BCRC 16820 / KCTC 9966 / NRRL B-24157 / PYR-1) (Mycobacterium vanbaalenii).